The primary structure comprises 155 residues: 3-hydroxyacyl-[acyl-carrier-protein] dehydratase FabZ (155 aa).

His58 is a catalytic residue.

This sequence belongs to the thioester dehydratase family. FabZ subfamily.

Its subcellular location is the cytoplasm. It carries out the reaction a (3R)-hydroxyacyl-[ACP] = a (2E)-enoyl-[ACP] + H2O. Functionally, involved in unsaturated fatty acids biosynthesis. Catalyzes the dehydration of short chain beta-hydroxyacyl-ACPs and long chain saturated and unsaturated beta-hydroxyacyl-ACPs. This is 3-hydroxyacyl-[acyl-carrier-protein] dehydratase FabZ from Rhizobium johnstonii (strain DSM 114642 / LMG 32736 / 3841) (Rhizobium leguminosarum bv. viciae).